A 207-amino-acid chain; its full sequence is MKPLTPRQQQVFDLIKSKIEVTGMPPTRAEIARELGFRSANAAEEHLKALARKQVIEIVPGASRGIRILLEEEAANDEPGLPLIGRVAAGEPILAQEHVEMHYQVDPSMFRPQADFLLRVHGESMKDIGIMDGDLLAVHKTQDVRNGQVVVARVEDDVTVKRLERKGSTVLLHAENEEFAPIEVDLTSQQLTIEGIAVGIIRNTDWM.

Positions 28–48 (RAEIARELGFRSANAAEEHLK) form a DNA-binding region, H-T-H motif. Active-site for autocatalytic cleavage activity residues include serine 124 and lysine 161.

It belongs to the peptidase S24 family. Homodimer.

It carries out the reaction Hydrolysis of Ala-|-Gly bond in repressor LexA.. In terms of biological role, represses a number of genes involved in the response to DNA damage (SOS response), including recA and lexA. In the presence of single-stranded DNA, RecA interacts with LexA causing an autocatalytic cleavage which disrupts the DNA-binding part of LexA, leading to derepression of the SOS regulon and eventually DNA repair. This Vibrio vulnificus (strain CMCP6) protein is LexA repressor.